A 263-amino-acid polypeptide reads, in one-letter code: N-acyl homoserine lactonase AttM (263 aa).

Residues histidine 103, histidine 105, aspartate 107, histidine 108, histidine 180, aspartate 202, and histidine 247 each coordinate Zn(2+).

Belongs to the metallo-beta-lactamase superfamily. Requires Zn(2+) as cofactor.

The catalysed reaction is an N-acyl-L-homoserine lactone + H2O = an N-acyl-L-homoserine + H(+). This is N-acyl homoserine lactonase AttM from Azorhizobium caulinodans (strain ATCC 43989 / DSM 5975 / JCM 20966 / LMG 6465 / NBRC 14845 / NCIMB 13405 / ORS 571).